The sequence spans 383 residues: 3-ketosteroid-9-alpha-monooxygenase, oxygenase component (383 aa).

The region spanning 24 to 126 (WHCLGPVKNF…TDVRGGLLFV (103 aa)) is the Rieske domain. 4 residues coordinate [2Fe-2S] cluster: cysteine 65, histidine 67, cysteine 84, and histidine 87. 4 residues coordinate Fe cation: asparagine 173, histidine 179, histidine 184, and aspartate 302.

Homotrimer. The two-component system 3-ketosteroid-9-alpha-monooxygenase is composed of an oxygenase component KshA and a reductase component KshB. Requires [2Fe-2S] cluster as cofactor. Fe cation is required as a cofactor.

The catalysed reaction is androsta-1,4-diene-3,17-dione + 2 reduced [2Fe-2S]-[ferredoxin] + O2 + 2 H(+) = 9alpha-hydroxyandrosta-1,4-diene-3,17-dione + 2 oxidized [2Fe-2S]-[ferredoxin] + H2O. Its pathway is lipid metabolism; steroid biosynthesis. Involved in the degradation of cholesterol. Catalyzes the introduction of a 9a-hydroxyl moiety into 1,4-androstadiene-3,17-dione (ADD) to yield the 9alpha-hydroxy-1,4-androstadiene-3,17-dione (9OHADD) intermediate which spontaneously form 3-hydroxy-9,10-seconandrost-1,3,5(10)-triene-9,17-dione (HSA) via the meta-cleavage of ring B with concomitant aromatization of ring A. The sequence is that of 3-ketosteroid-9-alpha-monooxygenase, oxygenase component (kshA) from Mycolicibacterium smegmatis (strain ATCC 700084 / mc(2)155) (Mycobacterium smegmatis).